Consider the following 228-residue polypeptide: ATP-dependent dethiobiotin synthetase BioD (228 aa).

Position 12–17 (12–17 (EIGKTT)) interacts with ATP. Thr16 provides a ligand contact to Mg(2+). Lys37 is a catalytic residue. Ser41 provides a ligand contact to substrate. Residues Asp54, 116–119 (EGAG), and 205–207 (PRL) each bind ATP. The Mg(2+) site is built by Asp54 and Glu116.

The protein belongs to the dethiobiotin synthetase family. In terms of assembly, homodimer. Mg(2+) is required as a cofactor.

The protein resides in the cytoplasm. The enzyme catalyses (7R,8S)-7,8-diammoniononanoate + CO2 + ATP = (4R,5S)-dethiobiotin + ADP + phosphate + 3 H(+). It functions in the pathway cofactor biosynthesis; biotin biosynthesis; biotin from 7,8-diaminononanoate: step 1/2. Its function is as follows. Catalyzes a mechanistically unusual reaction, the ATP-dependent insertion of CO2 between the N7 and N8 nitrogen atoms of 7,8-diaminopelargonic acid (DAPA, also called 7,8-diammoniononanoate) to form a ureido ring. The protein is ATP-dependent dethiobiotin synthetase BioD of Pseudomonas aeruginosa (strain UCBPP-PA14).